Here is a 406-residue protein sequence, read N- to C-terminus: Eukaryotic initiation factor 4A-I (406 aa).

A disordered region spans residues 1-21; that stretch reads MSASQDSRSRDNGPDGMEPEG. S2 is modified (N-acetylserine). Phosphoserine is present on S4. The Q motif signature appears at 32–60; it reads DSLDDMNLSESLLRGIYAYGFEKPSAIQQ. In terms of domain architecture, Helicase ATP-binding spans 63–234; it reads ILSCIKGYDV…KKFMRDPIRI (172 aa). 76–83 is a binding site for ATP; sequence AQSGTGKT. N6-acetyllysine is present on K118. K146 is covalently cross-linked (Glycyl lysine isopeptide (Lys-Gly) (interchain with G-Cter in SUMO2)). Position 158 is a phosphothreonine (T158). K174 carries the N6-acetyllysine modification. Residues 182–185 carry the DEAD box motif; the sequence is DEAD. N6-acetyllysine is present on K193. Residue K225 forms a Glycyl lysine isopeptide (Lys-Gly) (interchain with G-Cter in SUMO2) linkage. Position 238 is an N6-acetyllysine; alternate (K238). Residue K238 forms a Glycyl lysine isopeptide (Lys-Gly) (interchain with G-Cter in SUMO2); alternate linkage. The Helicase C-terminal domain maps to 245-406; sequence GIRQFYINVE…EMPLNVADLI (162 aa). Residues K309, K369, and K381 each participate in a glycyl lysine isopeptide (Lys-Gly) (interchain with G-Cter in SUMO2) cross-link.

It belongs to the DEAD box helicase family. eIF4A subfamily. EIF4F is a multi-subunit complex, the composition of which varies with external and internal environmental conditions. It is composed of at least EIF4A, EIF4E and EIF4G1/EIF4G3. Interacts with PAIP1, EIF4E and UPF2. Found in a complex with XPO7, EIF4A1, ARHGAP1, VPS26A, VPS29, VPS35 and SFN. May interact with NOM1. Interacts with PDCD4; this interferes with the interaction between EIF4A and EIF4G. Interacts with RBM4. Interacts with DDX3X in an RNA-independent manner. Interacts with PKP1 (via N-terminus); the interaction promotes EIF4A1 recruitment to the cap-dependent translation complex and EIF4A1 ATPase activity.

The protein localises to the cytoplasm. It is found in the perinuclear region. It localises to the cell membrane. Its subcellular location is the stress granule. The catalysed reaction is ATP + H2O = ADP + phosphate + H(+). Functionally, ATP-dependent RNA helicase which is a subunit of the eIF4F complex involved in cap recognition and is required for mRNA binding to ribosome. In the current model of translation initiation, eIF4A unwinds RNA secondary structures in the 5'-UTR of mRNAs which is necessary to allow efficient binding of the small ribosomal subunit, and subsequent scanning for the initiator codon. As a result, promotes cell proliferation and growth. In Pongo abelii (Sumatran orangutan), this protein is Eukaryotic initiation factor 4A-I (EIF4A1).